The following is a 223-amino-acid chain: Translation initiation factor 6 (223 aa).

Belongs to the eIF-6 family.

In terms of biological role, binds to the 50S ribosomal subunit and prevents its association with the 30S ribosomal subunit to form the 70S initiation complex. This chain is Translation initiation factor 6, found in Methanobrevibacter smithii (strain ATCC 35061 / DSM 861 / OCM 144 / PS).